The primary structure comprises 672 residues: MKKPKLSKVEKIDKIDLFSSLWKQRSVRVIMAIGFLYLVIVSVEIPLVFKSWSSSSVPLDALSRLEKLNNEQEPQVEIIPNPPLEPVSYPVSNPTIVTRTDLVQNKVREHHRGVLSSLRFDSETFDPSSKDGSVELHKSAKEAWQLGRKLWKELESGRLEKLVEKPEKNKPDSCPHSVSLTGSEFMNRENKLMELPCGLTLGSHITLVGRPRKAHPKEGDWSKLVSQFVIELQGLKTVEGEDPPRILHFNPRLKGDWSKKPVIEQNSCYRMQWGPAQRCEGWKSRDDEETVDSHVKCEKWIRDDDNYSEGSRARWWLNRLIGRRKRVKVEWPFPFVEEKLFVLTLSAGLEGYHINVDGKHVTSFPYRTGFTLEDATGLTVNGDIDVHSVFVASLPTSHPSFAPQRHLELSKRWQAPVVPDGPVEIFIGILSAGNHFSERMAVRKSWMQHVLITSAKVVARFFVALHGRKEVNVELKKEAEYFGDIVLVPYMDSYDLVVLKTVAICEHGALAFSAKYIMKCDDDTFVKLGAVINEVKKVPEGRSLYIGNMNYYHKPLRGGKWAVTYEEWPEEDYPPYANGPGYVLSSDIARFIVDKFERHKLRLFKMEDVSVGMWVEHFKNTTNPVDYRHSLRFCQFGCVENYYTAHYQSPRQMICLWDKLLRQNKPECCNMR.

The Cytoplasmic segment spans residues 1–28; it reads MKKPKLSKVEKIDKIDLFSSLWKQRSVR. Residues 29-49 traverse the membrane as a helical; Signal-anchor for type II membrane protein segment; the sequence is VIMAIGFLYLVIVSVEIPLVF. Topologically, residues 50–672 are lumenal; sequence KSWSSSSVPL…QNKPECCNMR (623 aa). Positions 191 to 392 constitute a Galectin domain; it reads KLMELPCGLT…DIDVHSVFVA (202 aa). 2 N-linked (GlcNAc...) asparagine glycosylation sites follow: N306 and N620.

This sequence belongs to the glycosyltransferase 31 family. It depends on Mn(2+) as a cofactor. In terms of tissue distribution, expressed in juvenile leaves, stems, cauline leaves and siliques.

It is found in the golgi apparatus membrane. It participates in protein modification; protein glycosylation. In terms of biological role, possesses hydroxyproline O-galactosyltransferase activity. Transfers galactose from UDP-galactose to hydroxyproline residues in the arabinogalactan proteins (AGPs). Is specific for AGPs containing non-contiguous peptidyl hydroxyproline residues. Utilizes UDP-galactose solely as sugar donor. The addition of galactose onto the peptidyl hydroxyproline residues in AGP core proteins represents the first committed step in arabinogalactan polysaccharide addition. AGP glycans play essential roles in both vegetative and reproductive plant growth. This chain is Hydroxyproline O-galactosyltransferase GALT5, found in Arabidopsis thaliana (Mouse-ear cress).